A 774-amino-acid chain; its full sequence is Alpha,alpha-trehalose phosphorylase (774 aa).

Residue 369–370 participates in substrate binding; the sequence is WD. Catalysis depends on Glu498, which acts as the Proton donor. Substrate is bound at residue 610-611; the sequence is KQ.

Belongs to the glycosyl hydrolase 65 family. As to quaternary structure, homodimer.

The enzyme catalyses alpha,alpha-trehalose + phosphate = beta-D-glucose 1-phosphate + D-glucose. The protein operates within glycan degradation; trehalose degradation. Its activity is regulated as follows. Inhibited by Cu(2+), Hg(2+), Mg(2+), Mn(2+), Pb(2+) and Zn(2+). Catalyzes the reversible phosphorolytic cleavage of trehalose. Phosphorolysis is specific for trehalose, but D-xylose, D-galactose, L-arabinose, D-fucose, L-fucose, D-glucosamine and 2-deoxy D-glucose can act as substitutes for D-glucose in the synthetic reaction. This chain is Alpha,alpha-trehalose phosphorylase (treP), found in Thermoanaerobacter brockii (Thermoanaerobium brockii).